Reading from the N-terminus, the 314-residue chain is Tyrosine recombinase XerC (314 aa).

Residues 1 to 85 (MNEQVEAFLR…AVKSFFTFLT (85 aa)) form the Core-binding (CB) domain. Residues 106 to 291 (DLPRALTPRQ…NHESSHTPHA (186 aa)) enclose the Tyr recombinase domain. Active-site residues include Arg-147, Lys-171, His-243, Arg-246, and His-269. Catalysis depends on Tyr-278, which acts as the O-(3'-phospho-DNA)-tyrosine intermediate. Residues 284–314 (ESSHTPHAHPAPRASEVNGVRDEQALVPEEK) form a disordered region. Basic and acidic residues predominate over residues 302-314 (GVRDEQALVPEEK).

The protein belongs to the 'phage' integrase family. XerC subfamily. As to quaternary structure, forms a cyclic heterotetrameric complex composed of two molecules of XerC and two molecules of XerD.

It localises to the cytoplasm. Site-specific tyrosine recombinase, which acts by catalyzing the cutting and rejoining of the recombining DNA molecules. The XerC-XerD complex is essential to convert dimers of the bacterial chromosome into monomers to permit their segregation at cell division. It also contributes to the segregational stability of plasmids. This is Tyrosine recombinase XerC from Roseiflexus castenholzii (strain DSM 13941 / HLO8).